The primary structure comprises 285 residues: Isoprenyl transferase 2 (285 aa).

The segment at 11–30 (RREYRAPEPHPSGARAPKLP) is disordered. The active site involves Asp43. Asp43 lines the Mg(2+) pocket. Substrate-binding positions include 44-47 (GNGR), Trp48, Arg56, His60, and 88-90 (STE). Residue Asn91 is the Proton acceptor of the active site. Substrate-binding positions include Trp92, Arg94, Arg211, and 217–219 (RTS). Residue Glu230 coordinates Mg(2+).

It belongs to the UPP synthase family. In terms of assembly, homodimer. Requires Mg(2+) as cofactor.

Functionally, catalyzes the condensation of isopentenyl diphosphate (IPP) with allylic pyrophosphates generating different type of terpenoids. This Streptomyces avermitilis (strain ATCC 31267 / DSM 46492 / JCM 5070 / NBRC 14893 / NCIMB 12804 / NRRL 8165 / MA-4680) protein is Isoprenyl transferase 2.